A 660-amino-acid chain; its full sequence is DNA mismatch repair protein MutL (660 aa).

This sequence belongs to the DNA mismatch repair MutL/HexB family.

Its function is as follows. This protein is involved in the repair of mismatches in DNA. It is required for dam-dependent methyl-directed DNA mismatch repair. May act as a 'molecular matchmaker', a protein that promotes the formation of a stable complex between two or more DNA-binding proteins in an ATP-dependent manner without itself being part of a final effector complex. This is DNA mismatch repair protein MutL from Solibacter usitatus (strain Ellin6076).